The sequence spans 343 residues: Cytoplasmic tRNA 2-thiolation protein 1 (343 aa).

Belongs to the TtcA family. CTU1/NCS6/ATPBD3 subfamily.

The protein localises to the cytoplasm. Its pathway is tRNA modification; 5-methoxycarbonylmethyl-2-thiouridine-tRNA biosynthesis. In terms of biological role, plays a central role in 2-thiolation of mcm(5)S(2)U at tRNA wobble positions of tRNA(Lys), tRNA(Glu) and tRNA(Gln). Directly binds tRNAs and probably acts by catalyzing adenylation of tRNAs, an intermediate required for 2-thiolation. It is unclear whether it acts as a sulfurtransferase that transfers sulfur from thiocarboxylated URM1 onto the uridine of tRNAs at wobble position. This Drosophila melanogaster (Fruit fly) protein is Cytoplasmic tRNA 2-thiolation protein 1.